Reading from the N-terminus, the 215-residue chain is 3-demethoxyubiquinol 3-hydroxylase (215 aa).

Fe cation-binding residues include glutamate 64, glutamate 94, histidine 97, glutamate 146, glutamate 178, and histidine 181.

It belongs to the COQ7 family. Requires Fe cation as cofactor.

The protein resides in the cell membrane. It catalyses the reaction a 5-methoxy-2-methyl-3-(all-trans-polyprenyl)benzene-1,4-diol + AH2 + O2 = a 3-demethylubiquinol + A + H2O. It functions in the pathway cofactor biosynthesis; ubiquinone biosynthesis. In terms of biological role, catalyzes the hydroxylation of 2-nonaprenyl-3-methyl-6-methoxy-1,4-benzoquinol during ubiquinone biosynthesis. The sequence is that of 3-demethoxyubiquinol 3-hydroxylase from Ectopseudomonas mendocina (strain ymp) (Pseudomonas mendocina).